Here is a 325-residue protein sequence, read N- to C-terminus: Tagatose 1,6-diphosphate aldolase (325 aa).

Belongs to the aldolase LacD family.

It catalyses the reaction D-tagatofuranose 1,6-bisphosphate = D-glyceraldehyde 3-phosphate + dihydroxyacetone phosphate. It participates in carbohydrate metabolism; D-tagatose 6-phosphate degradation; D-glyceraldehyde 3-phosphate and glycerone phosphate from D-tagatose 6-phosphate: step 2/2. This Staphylococcus epidermidis (strain ATCC 12228 / FDA PCI 1200) protein is Tagatose 1,6-diphosphate aldolase.